The chain runs to 197 residues: uncharacterized protein (197 aa).

Residues 7-27 form a helical membrane-spanning segment; the sequence is PISVGQMVLICIFILIILFVI.

It belongs to the IIV-6 307L family.

Its subcellular location is the membrane. This is an uncharacterized protein from Acheta domesticus (House cricket).